Reading from the N-terminus, the 543-residue chain is CTP synthase (543 aa).

The interval 1–267 (MKQTKYIFVT…LSPIAEILDL (267 aa)) is amidoligase domain. Ser15 lines the CTP pocket. Ser15 is a binding site for UTP. Residues 16–21 (SLGKGI) and Asp73 each bind ATP. Residues Asp73 and Glu141 each coordinate Mg(2+). CTP contacts are provided by residues 148–150 (DIE), 188–193 (KTKPTQ), and Lys224. UTP-binding positions include 188–193 (KTKPTQ) and Lys224. In terms of domain architecture, Glutamine amidotransferase type-1 spans 292–543 (KIAFVGKYVD…IKAAINYEDN (252 aa)). An L-glutamine-binding site is contributed by Gly354. Catalysis depends on Cys381, which acts as the Nucleophile; for glutamine hydrolysis. L-glutamine is bound by residues 382–385 (LGMQ), Glu405, and Arg473. Catalysis depends on residues His516 and Glu518.

The protein belongs to the CTP synthase family. Homotetramer.

It catalyses the reaction UTP + L-glutamine + ATP + H2O = CTP + L-glutamate + ADP + phosphate + 2 H(+). The enzyme catalyses L-glutamine + H2O = L-glutamate + NH4(+). It carries out the reaction UTP + NH4(+) + ATP = CTP + ADP + phosphate + 2 H(+). It participates in pyrimidine metabolism; CTP biosynthesis via de novo pathway; CTP from UDP: step 2/2. Allosterically activated by GTP, when glutamine is the substrate; GTP has no effect on the reaction when ammonia is the substrate. The allosteric effector GTP functions by stabilizing the protein conformation that binds the tetrahedral intermediate(s) formed during glutamine hydrolysis. Inhibited by the product CTP, via allosteric rather than competitive inhibition. Functionally, catalyzes the ATP-dependent amination of UTP to CTP with either L-glutamine or ammonia as the source of nitrogen. Regulates intracellular CTP levels through interactions with the four ribonucleotide triphosphates. This is CTP synthase from Campylobacter jejuni subsp. jejuni serotype O:6 (strain 81116 / NCTC 11828).